Here is a 130-residue protein sequence, read N- to C-terminus: MISLASWQLLLLLCVASFGEPLAKMAPVVNPEPTGQQSGPQELVNAWQKGPRYAESKPGAAGLRARRTSPCPPVENPTGHQRPPCATRSRLIPAPRGSVLVQREKDMSAYNWNSFGLRYGRRQVARAARG.

The first 19 residues, 1 to 19 (MISLASWQLLLLLCVASFG), serve as a signal peptide directing secretion. Residues 52–91 (RYAESKPGAAGLRARRTSPCPPVENPTGHQRPPCATRSRL) form a disordered region. Cysteines 71 and 85 form a disulfide. A Phosphotyrosine modification is found at Y110. Residues 110–119 (YNWNSFGLRY) form an essential for receptor binding and receptor activation region. Y119 carries the tyrosine amide modification.

Belongs to the KISS1 family. In terms of tissue distribution, highest levels in the cecum and colon. Moderate levels present in the liver, spleen, kidney, ovary, uterus and small intestine. Low levels in the stomach, pancreas and placenta. Expressed only moderately in the placenta. Persistent expression is detected in hypothalamus throughout postnatal development, with maximum expression levels at puberty in both male and female. Hypothalamic expression is sensitive to neonatal imprinting by estrogen. Expression is higher in the hypothalamus than in the brainstem and spinal cord. In the brain, metastin-like immunoreactivity is found mainly in three groups of cells: dorsomedial hypothalamic nucleus, nucleus of the solitary tract, and caudal ventrolateral medulla.

The protein localises to the secreted. Functionally, metastasis suppressor protein. May regulate events downstream of cell-matrix adhesion, perhaps involving cytoskeletal reorganization. Generates a C-terminally amidated peptide, metastin which functions as the endogenous ligand of the G-protein coupled receptor GPR54. The receptor is also essential for normal gonadotropin-released hormone physiology and for puberty. The hypothalamic KiSS1/GPR54 system is a pivotal factor in central regulation of the gonadotropic axis at puberty and in adulthood. Intracerebroventricular administration induces an increase in serum LH and FSH levels in prepubertal male and female as well as in adult animals. The polypeptide is Metastasis-suppressor KiSS-1 (Kiss1) (Rattus norvegicus (Rat)).